The following is a 183-amino-acid chain: Negative modulator of initiation of replication (183 aa).

Residues Val43–Arg70 are disordered. The segment covering Ser50–Ala61 has biased composition (low complexity). Interaction with DNA regions lie at residues Ala89–Val90, Arg118–Tyr122, and Asn152–Lys158.

This sequence belongs to the SeqA family. As to quaternary structure, homodimer. Polymerizes to form helical filaments.

It is found in the cytoplasm. In terms of biological role, negative regulator of replication initiation, which contributes to regulation of DNA replication and ensures that replication initiation occurs exactly once per chromosome per cell cycle. Binds to pairs of hemimethylated GATC sequences in the oriC region, thus preventing assembly of replication proteins and re-initiation at newly replicated origins. Repression is relieved when the region becomes fully methylated. The sequence is that of Negative modulator of initiation of replication from Pantoea ananatis (strain AJ13355).